The following is a 351-amino-acid chain: Protein RecA (351 aa).

An ATP-binding site is contributed by 68 to 75; it reads GPESSGKT.

Belongs to the RecA family.

Its subcellular location is the cytoplasm. Can catalyze the hydrolysis of ATP in the presence of single-stranded DNA, the ATP-dependent uptake of single-stranded DNA by duplex DNA, and the ATP-dependent hybridization of homologous single-stranded DNAs. It interacts with LexA causing its activation and leading to its autocatalytic cleavage. This chain is Protein RecA, found in Chloroflexus aggregans (strain MD-66 / DSM 9485).